The primary structure comprises 376 residues: Glucose-1-phosphate adenylyltransferase (376 aa).

Alpha-D-glucose 1-phosphate contacts are provided by residues Tyr101, Gly166, 181-182, and Ser192; that span reads EK.

This sequence belongs to the bacterial/plant glucose-1-phosphate adenylyltransferase family. Homotetramer.

It catalyses the reaction alpha-D-glucose 1-phosphate + ATP + H(+) = ADP-alpha-D-glucose + diphosphate. It participates in glycan biosynthesis; glycogen biosynthesis. Involved in the biosynthesis of ADP-glucose, a building block required for the elongation reactions to produce glycogen. Catalyzes the reaction between ATP and alpha-D-glucose 1-phosphate (G1P) to produce pyrophosphate and ADP-Glc. This is Glucose-1-phosphate adenylyltransferase from Bacillus thuringiensis (strain Al Hakam).